Reading from the N-terminus, the 318-residue chain is UAP56-interacting factor (318 aa).

At Met1 the chain carries N-acetylmethionine. Positions 1–27 (MNRFSTRLMGATATPPPAPPKARSNEN) are disordered. Thr14 is modified (phosphothreonine). Ser24 carries the phosphoserine modification. A UAP56-binding motif motif is present at residues 27–45 (NLDKIDMSLDDIIKLNRKE). 2 positions are modified to phosphoserine: Ser61 and Ser118. Residue Lys140 forms a Glycyl lysine isopeptide (Lys-Gly) (interchain with G-Cter in SUMO1) linkage. Polar residues predominate over residues 163-180 (LNRKNNIPNNFTRSGNKL). The segment at 163–183 (LNRKNNIPNNFTRSGNKLSHQ) is disordered. Lys261 is covalently cross-linked (Glycyl lysine isopeptide (Lys-Gly) (interchain with G-Cter in SUMO2)).

This sequence belongs to the UIF family. Interacts with DDX39B/UAP56 and NXF1; interaction with DDX39B/UAP56 and NXF1 are mutually exclusive. Interacts with SSRP1; required for its recruitment to mRNAs. Interacts with CHTOP.

It is found in the nucleus. The protein resides in the nucleoplasm. Its subcellular location is the nucleus speckle. Functionally, required for mRNA export from the nucleus to the cytoplasm. Acts as an adapter that uses the DDX39B/UAP56-NFX1 pathway to ensure efficient mRNA export and delivering to the nuclear pore. Associates with spliced and unspliced mRNAs simultaneously with ALYREF/THOC4. In Bos taurus (Bovine), this protein is UAP56-interacting factor (FYTTD1).